Here is a 426-residue protein sequence, read N- to C-terminus: Pyrophosphate--fructose 6-phosphate 1-phosphotransferase 1 (426 aa).

Glycine 15 contributes to the diphosphate binding site. Aspartate 114 contacts Mg(2+). Residues 140–142, 186–188, glutamate 247, and 308–311 contribute to the substrate site; these read TID, MGR, and YELR. Residue aspartate 142 is the Proton acceptor of the active site.

It belongs to the phosphofructokinase type A (PFKA) family. PPi-dependent PFK group II subfamily. Clade 'Short' sub-subfamily. Homotetramer. Requires Mg(2+) as cofactor.

Its subcellular location is the cytoplasm. It catalyses the reaction beta-D-fructose 6-phosphate + diphosphate = beta-D-fructose 1,6-bisphosphate + phosphate + H(+). Its pathway is carbohydrate degradation; glycolysis; D-glyceraldehyde 3-phosphate and glycerone phosphate from D-glucose: step 3/4. With respect to regulation, non-allosteric. Its function is as follows. Catalyzes the phosphorylation of D-fructose 6-phosphate, the first committing step of glycolysis. Uses inorganic phosphate (PPi) as phosphoryl donor instead of ATP like common ATP-dependent phosphofructokinases (ATP-PFKs), which renders the reaction reversible, and can thus function both in glycolysis and gluconeogenesis. Consistently, PPi-PFK can replace the enzymes of both the forward (ATP-PFK) and reverse (fructose-bisphosphatase (FBPase)) reactions. The sequence is that of Pyrophosphate--fructose 6-phosphate 1-phosphotransferase 1 (Pfk1) from Trichomonas vaginalis (strain ATCC PRA-98 / G3).